A 1154-amino-acid chain; its full sequence is Voltage-dependent calcium channel subunit alpha-2/delta-2 (1154 aa).

Residues 1–18 (MAVPARTCGASWPGPVRT) form the signal peptide. The segment at 1–37 (MAVPARTCGASWPGPVRTARPWPGRGPRPCPDPRGPA) is disordered. The Extracellular portion of the chain corresponds to 19–1116 (ARPWPGRGPR…TEDTSDCGRG (1098 aa)). Positions 24 to 34 (GRGPRPCPDPR) are enriched in pro residues. The N-linked (GlcNAc...) asparagine glycan is linked to Asn-205. The VWFA domain occupies 294–472 (DMVIIVDVSG…INTQEYLDVL (179 aa)). A divalent metal cation contacts are provided by Asp-300, Ser-302, and Ser-304. Positions 300-304 (DVSGS) match the MIDAS-like motif motif. Residues Asn-389, Asn-421, Asn-510, Asn-543, Asn-627, and Asn-864 are each glycosylated (N-linked (GlcNAc...) asparagine). Residues Cys-446 and Cys-1101 are joined by a disulfide bond. The Cache domain maps to 488 to 577 (WTNVYEDALG…KPQTTNFREP (90 aa)). The chain crosses the membrane as a helical span at residues 1117–1137 (ASFPPSLGVLVSLQLLLLLGL). The Cytoplasmic portion of the chain corresponds to 1138 to 1154 (PPRPQPQVHSFAASRHL).

It belongs to the calcium channel subunit alpha-2/delta family. Dimer formed of alpha-2-2 and delta-2 chains; disulfide-linked. Voltage-dependent calcium channels are multisubunit complexes, consisting of alpha-1 (CACNA1), alpha-2 (CACNA2D), beta (CACNB) and delta (CACNA2D) subunits in a 1:1:1:1 ratio. In terms of processing, N-glycosylated. May be proteolytically processed into subunits alpha-2-2 and delta-2 that are disulfide-linked. It is however unclear whether such cleavage really takes place in vivo and has a functional role. According to PubMed:11306709, it is processed, at least in vitro, while according to PubMed:17052222, it is only poorly processed in vivo. As to expression, predominantly expressed in brain in a restricted pattern. Also expressed at lower level in kidney and testis Not expressed in lung at any moment of development. In brain, it localizes to sections of P21 brain. Expressed at high level in the cerebellum, with moderate levels in medulla, pons, and striatum. Also expressed in cortex, hippocampus, habenula and nucleus reticularis thalami (nRT). Strongly expressed in cerebellar Purkinje cells.

The protein localises to the membrane. Functionally, the alpha-2/delta subunit of voltage-dependent calcium channels regulates calcium current density and activation/inactivation kinetics of the calcium channel. Acts as a regulatory subunit for P/Q-type calcium channel (CACNA1A), N-type (CACNA1B), L-type (CACNA1C OR CACNA1D) and possibly T-type (CACNA1G). The sequence is that of Voltage-dependent calcium channel subunit alpha-2/delta-2 (Cacna2d2) from Mus musculus (Mouse).